A 639-amino-acid chain; its full sequence is Complex I assembly factor Egm, mitochondrial (639 aa).

A mitochondrion-targeting transit peptide spans 1 to 26 (MRPNLFSGASRLLTYSRNGKLLTRGR). The interval 23–65 (TRGRSTKATSSSLDSQHQDAATTEGGRAESVEESPEQQRKLPT) is disordered. Polar residues predominate over residues 28–43 (TKATSSSLDSQHQDAA). Basic and acidic residues predominate over residues 48–65 (GRAESVEESPEQQRKLPT).

This sequence belongs to the acyl-CoA dehydrogenase family. In terms of assembly, associates with mitochondrial complex I assembly intermediates during its biogenesis. Requires FAD as cofactor.

It localises to the mitochondrion. In terms of biological role, as part of the MCIA complex, primarily participates in the assembly of the mitochondrial complex I and therefore plays a role in oxidative phosphorylation. The chain is Complex I assembly factor Egm, mitochondrial from Drosophila melanogaster (Fruit fly).